Here is a 58-residue protein sequence, read N- to C-terminus: Cecropin-A (58 aa).

The signal sequence occupies residues 1-23; it reads MNFSKIFIFVVLAVLLLCSQTEA. Leucine amide is present on Leu-57.

This sequence belongs to the cecropin family. In terms of tissue distribution, relatively abundant in head, thorax and to a lesser extent in abdominal carcass and anterior midgut.

The protein resides in the secreted. In terms of biological role, antibacterial activity against several Gram-positive and Gram-negative bacteria. Antifungal activity against A.fumigatus, B.cinerea, F.culmorum, F.oxysporum, N.crassa, C.albicans, C.neoformans and S.cerevisiae. The polypeptide is Cecropin-A (CecA) (Anopheles gambiae (African malaria mosquito)).